Reading from the N-terminus, the 138-residue chain is Putative pre-16S rRNA nuclease (138 aa).

It belongs to the YqgF nuclease family.

It is found in the cytoplasm. Its function is as follows. Could be a nuclease involved in processing of the 5'-end of pre-16S rRNA. The chain is Putative pre-16S rRNA nuclease from Klebsiella pneumoniae (strain 342).